The sequence spans 98 residues: MEPAAPTVQPRAQPPPPDVWPPVGSEEEFYDCPDYYYLRDFPACGAGRINGRTRRERELRTNWLVPGGHERKIAQKLLNSQRKRRQRQLQPRPRTRLT.

The segment covering 1–11 has biased composition (low complexity); it reads MEPAAPTVQPR. Disordered regions lie at residues 1–24 and 78–98; these read MEPA…PPVG and LNSQ…TRLT. Basic residues predominate over residues 81–98; that stretch reads QRKRRQRQLQPRPRTRLT.

Belongs to the NUPR family.

The protein localises to the nucleus. Acts as a transcriptional repressor by inhibiting gene expression at the NUPR1 promoter in a p53/TP53-dependent manner in cancer cells. Involved in the G1 cell cycle arrest, and in a decrease in cell viability and cell proliferation. Plays a role as a negative regulator of the protumoral factor NUPR1. In Bos taurus (Bovine), this protein is Nuclear protein 2.